A 21-amino-acid chain; its full sequence is Fibrinogen beta chain (21 aa).

Residues 1-11 (EFPTDYDEGED) show a composition bias toward acidic residues. Positions 1-21 (EFPTDYDEGEDDRPKVGLGAR) are disordered. A Sulfotyrosine modification is found at tyrosine 6.

In terms of assembly, heterohexamer; disulfide linked. Contains 2 sets of 3 non-identical chains (alpha, beta and gamma). The 2 heterotrimers are in head to head conformation with the N-termini in a small central domain. In terms of processing, conversion of fibrinogen to fibrin is triggered by thrombin, which cleaves fibrinopeptides A and B from alpha and beta chains, and thus exposes the N-terminal polymerization sites responsible for the formation of the soft clot.

It localises to the secreted. In terms of biological role, cleaved by the protease thrombin to yield monomers which, together with fibrinogen alpha (FGA) and fibrinogen gamma (FGG), polymerize to form an insoluble fibrin matrix. Fibrin has a major function in hemostasis as one of the primary components of blood clots. In addition, functions during the early stages of wound repair to stabilize the lesion and guide cell migration during re-epithelialization. Was originally thought to be essential for platelet aggregation, based on in vitro studies using anticoagulated blood. However subsequent studies have shown that it is not absolutely required for thrombus formation in vivo. Enhances expression of SELP in activated platelets. Maternal fibrinogen is essential for successful pregnancy. Fibrin deposition is also associated with infection, where it protects against IFNG-mediated hemorrhage. May also facilitate the antibacterial immune response via both innate and T-cell mediated pathways. This chain is Fibrinogen beta chain (FGB), found in Bison bonasus (European bison).